The primary structure comprises 182 residues: Ribosome maturation factor RimM (182 aa).

The PRC barrel domain maps to 103–182 (EDDYYWKDLM…RVEVDWDPGF (80 aa)).

The protein belongs to the RimM family. As to quaternary structure, binds ribosomal protein uS19.

The protein localises to the cytoplasm. In terms of biological role, an accessory protein needed during the final step in the assembly of 30S ribosomal subunit, possibly for assembly of the head region. Essential for efficient processing of 16S rRNA. May be needed both before and after RbfA during the maturation of 16S rRNA. It has affinity for free ribosomal 30S subunits but not for 70S ribosomes. The protein is Ribosome maturation factor RimM of Yersinia enterocolitica serotype O:8 / biotype 1B (strain NCTC 13174 / 8081).